We begin with the raw amino-acid sequence, 100 residues long: Urease subunit gamma (100 aa).

Belongs to the urease gamma subunit family. As to quaternary structure, heterotrimer of UreA (gamma), UreB (beta) and UreC (alpha) subunits. Three heterotrimers associate to form the active enzyme.

The protein resides in the cytoplasm. It carries out the reaction urea + 2 H2O + H(+) = hydrogencarbonate + 2 NH4(+). It functions in the pathway nitrogen metabolism; urea degradation; CO(2) and NH(3) from urea (urease route): step 1/1. The chain is Urease subunit gamma from Prochlorococcus marinus (strain MIT 9303).